The primary structure comprises 856 residues: Leucine--tRNA ligase (856 aa).

Residues 53–63 (PYPSGNLHMGH) carry the 'HIGH' region motif. Positions 622 to 626 (KMSKS) match the 'KMSKS' region motif. ATP is bound at residue lysine 625.

The protein belongs to the class-I aminoacyl-tRNA synthetase family.

The protein localises to the cytoplasm. The enzyme catalyses tRNA(Leu) + L-leucine + ATP = L-leucyl-tRNA(Leu) + AMP + diphosphate. The sequence is that of Leucine--tRNA ligase from Prochlorococcus marinus (strain MIT 9301).